A 276-amino-acid polypeptide reads, in one-letter code: Proteasome subunit beta type-8 (276 aa).

A propeptide spans 1 to 72 (MALLDLCGAP…RKVQIEMAHG (72 aa)) (removed in mature form). Thr-73 functions as the Nucleophile in the catalytic mechanism.

This sequence belongs to the peptidase T1B family. In terms of assembly, the 26S proteasome consists of a 20S proteasome core and two 19S regulatory subunits. The 20S proteasome core is composed of 28 subunits that are arranged in four stacked rings, resulting in a barrel-shaped structure. The two end rings are each formed by seven alpha subunits, and the two central rings are each formed by seven beta subunits. The catalytic chamber with the active sites is on the inside of the barrel. Component of the immunoproteasome, where it displaces the equivalent housekeeping subunit PSMB5. Component of the spermatoproteasome, a form of the proteasome specifically found in testis. Directly interacts with POMP. Interacts with TAP1. In terms of processing, autocleaved. The resulting N-terminal Thr residue of the mature subunit is responsible for the nucleophile proteolytic activity.

The protein localises to the cytoplasm. The protein resides in the nucleus. The catalysed reaction is Cleavage of peptide bonds with very broad specificity.. The proteasome is a multicatalytic proteinase complex which is characterized by its ability to cleave peptides with Arg, Phe, Tyr, Leu, and Glu adjacent to the leaving group at neutral or slightly basic pH. The proteasome has an ATP-dependent proteolytic activity. This subunit is involved in antigen processing to generate class I binding peptides. May participate in the generation of spliced peptides resulting from the ligation of two separate proteasomal cleavage products that are not contiguous in the parental protein. Required for adipocyte differentiation. In Rattus norvegicus (Rat), this protein is Proteasome subunit beta type-8 (Psmb8).